Reading from the N-terminus, the 1669-residue chain is Dystrophin, isoform B (1669 aa).

Residues 1–11 (MTAKPPPPIPP) are compositionally biased toward pro residues. Disordered stretches follow at residues 1-28 (MTAK…LAPE), 43-243 (RGQQ…SEDA), 327-356 (RAQA…RSTI), 389-417 (GGGG…MPLS), and 481-508 (SGAL…NSSG). Over residues 53–62 (SQEQHATNTL) the composition is skewed to polar residues. Positions 118 to 131 (GLPPTMRQPPPLPR) are enriched in pro residues. A compositionally biased stretch (low complexity) spans 132-147 (KPASTQSSAQNSAQSS). Residues 153-166 (KFKDKPPPPPEKHS) are compositionally biased toward basic and acidic residues. Composition is skewed to low complexity over residues 328-347 (AQAQ…SNSQ) and 396-405 (STGNAVANSG). The span at 485-500 (SREELRMRRRSSHDET) shows a compositional bias: basic and acidic residues. 4 Spectrin repeats span residues 541–643 (QRFE…KQLH), 650–747 (QSFD…NRLE), 754–883 (NALL…HRLD), and 890–990 (RQFQ…KVLC). Residues 827 to 851 (VSDTSDTEANHDSDSRYMSAEEQSR) form a disordered region. The disordered stretch occupies residues 994–1024 (AQQTHENGDDGRTTSNSGTIGPLPNLGQSVK). The WW domain maps to 1021-1054 (QSVKPPWERATTAANVPYYIDHERETTHWDHPEM). The ZZ-type zinc-finger motif lies at 1279-1335 (KHQAKCNICKEYPIVGFRYRCLKCFNFDMCQKCFFFGRNAKNHKLTHPMHEYCTTTT). Residues Cys1284, Cys1287, Cys1299, Cys1302, Cys1308, Cys1311, His1321, and His1325 each contribute to the Zn(2+) site. Ser1379 carries the phosphoserine modification. Disordered regions lie at residues 1488–1516 (EQSG…GEQG) and 1559–1669 (DEPN…ELQK). Polar residues-rich tracts occupy residues 1497-1509 (NGMQ…MTGL) and 1580-1611 (ALNS…QQNG). Acidic residues predominate over residues 1630–1641 (QELESINDDLED). Residues 1642–1660 (SSSSNTTNTTTTTTTTATT) show a composition bias toward low complexity.

In terms of assembly, component of the dystrophin associated protein complex (DAPC). Interacts with Dg, via the Dg WW domain binding sites. As to expression, expressed in neuronally derived tissues, mainly the CNS and the brain of stage 16 embryos. Lower level expression is seen in the sensory organs. Expression is absent from the musculature. In larvae, expression is predominant throughout the neuropil and brain and in the eye antennal disks.

It localises to the cell membrane. It is found in the sarcolemma. The protein resides in the cytoplasm. The protein localises to the cytoskeleton. In terms of biological role, required for the maintenance of appropriate synaptic retrograde communication and the stabilization of muscle cell architecture or physiology. May play a role in anchoring the cytoskeleton to the plasma membrane. This is Dystrophin, isoform B (Dys) from Drosophila melanogaster (Fruit fly).